A 282-amino-acid chain; its full sequence is MQKKYYELFFIVEEQYKNLFLGFAFDLGIEAIEEKDNGIYIRSHESLEELSWALEIFAQKLTTTFNLNHKIISNLSLVEKENKDWIQEYKKGIKPILVDNVYIHTTWQEEKKNCINIKINPALAFGSGHHESTHSCVKFLQKFSKSKLRALDLGCGSGILGIIMAKFGCNVEICDTDELAIDSSLENARLNGVDFHKAWCGSIDKANGLYNLIVANIIADVILILEKDIKNHLEDNAILILSGILDKYSTRIKEKFQDLELIDEMQINEWCSFVYKNNKKDK.

S-adenosyl-L-methionine-binding residues include Thr-133, Gly-154, Asp-175, and Asn-216.

Belongs to the methyltransferase superfamily. PrmA family.

The protein localises to the cytoplasm. The enzyme catalyses L-lysyl-[protein] + 3 S-adenosyl-L-methionine = N(6),N(6),N(6)-trimethyl-L-lysyl-[protein] + 3 S-adenosyl-L-homocysteine + 3 H(+). Functionally, methylates ribosomal protein L11. This is Ribosomal protein L11 methyltransferase from Campylobacter jejuni subsp. doylei (strain ATCC BAA-1458 / RM4099 / 269.97).